Here is a 319-residue protein sequence, read N- to C-terminus: tRNA-cytidine(32) 2-sulfurtransferase (319 aa).

Positions 43–48 (SGGKDS) match the PP-loop motif motif. Residues Cys118, Cys121, and Cys209 each coordinate [4Fe-4S] cluster.

It belongs to the TtcA family. Homodimer. It depends on Mg(2+) as a cofactor. Requires [4Fe-4S] cluster as cofactor.

It is found in the cytoplasm. The enzyme catalyses cytidine(32) in tRNA + S-sulfanyl-L-cysteinyl-[cysteine desulfurase] + AH2 + ATP = 2-thiocytidine(32) in tRNA + L-cysteinyl-[cysteine desulfurase] + A + AMP + diphosphate + H(+). It participates in tRNA modification. Functionally, catalyzes the ATP-dependent 2-thiolation of cytidine in position 32 of tRNA, to form 2-thiocytidine (s(2)C32). The sulfur atoms are provided by the cysteine/cysteine desulfurase (IscS) system. This chain is tRNA-cytidine(32) 2-sulfurtransferase, found in Neisseria gonorrhoeae (strain NCCP11945).